A 676-amino-acid polypeptide reads, in one-letter code: Ribosome quality control complex subunit TCF25 (676 aa).

Disordered stretches follow at residues 1-59 and 85-147; these read MSRR…VRVN and LTDA…ENGL. Residues 123–136 are compositionally biased toward basic residues; it reads GKLRKKKKKQKNKK. Residue serine 602 is modified to Phosphoserine.

It belongs to the TCF25 family. As to quaternary structure, component of the ribosome quality control complex (RQC), composed of the E3 ubiquitin ligase LTN1, TCF25 and NEMF associated with the 60S ribosomal subunit. Interacts (via C-terminus) with NFATC4; the interaction leads to suppresson of NFATC4 transcription factor activity and is reduced following stimulation with angiotensin-2. Interacts with XIAP. In terms of tissue distribution, in the embryo, widely expressed with highest levels in brain. In the adult, highest expression is found in the heart. Repressed in cardiac tissue of patients with heart failure (at protein level). mRNA levels in the heart are unchanged in patients with heart failure.

The protein resides in the nucleus. The protein localises to the cytoplasm. It is found in the cytosol. Functionally, component of the ribosome quality control complex (RQC), a ribosome-associated complex that mediates ubiquitination and extraction of incompletely synthesized nascent chains for proteasomal degradation. In the RQC complex, required to promote formation of 'Lys-48'-linked polyubiquitin chains during ubiquitination of incompletely synthesized proteins by LTN1. May negatively regulate the calcineurin-NFAT signaling cascade by suppressing the activity of transcription factor NFATC4. May play a role in cell death control. The sequence is that of Ribosome quality control complex subunit TCF25 from Homo sapiens (Human).